Consider the following 231-residue polypeptide: Casein kinase II subunit beta (231 aa).

This sequence belongs to the casein kinase 2 subunit beta family. In terms of assembly, tetramer composed of two alpha chains, one beta chain and one beta' chain. Phosphorylated by alpha subunit.

Functionally, regulatory subunit of casein kinase II/CK2. As part of the kinase complex regulates the basal catalytic activity of the alpha subunit a constitutively active serine/threonine-protein kinase that phosphorylates a large number of substrates containing acidic residues C-terminal to the phosphorylated serine or threonine. The protein is Casein kinase II subunit beta of Schizosaccharomyces pombe (strain 972 / ATCC 24843) (Fission yeast).